The primary structure comprises 406 residues: Acetate kinase (406 aa).

N10 lines the Mg(2+) pocket. Position 17 (K17) interacts with ATP. Position 92 (R92) interacts with substrate. D151 functions as the Proton donor/acceptor in the catalytic mechanism. Residues 211 to 215 (HLGSG), 286 to 288 (DFR), and 335 to 339 (GIGEN) each bind ATP. Residue E389 participates in Mg(2+) binding.

The protein belongs to the acetokinase family. Homodimer. Mg(2+) serves as cofactor. The cofactor is Mn(2+).

The protein resides in the cytoplasm. It carries out the reaction acetate + ATP = acetyl phosphate + ADP. It functions in the pathway metabolic intermediate biosynthesis; acetyl-CoA biosynthesis; acetyl-CoA from acetate: step 1/2. In terms of biological role, catalyzes the formation of acetyl phosphate from acetate and ATP. Can also catalyze the reverse reaction. The polypeptide is Acetate kinase (Buchnera aphidicola subsp. Cinara cedri (strain Cc)).